Consider the following 87-residue polypeptide: Pyocin-S1 immunity protein (87 aa).

Belongs to the colicins ColE2/ColE8/ColE9 and pyocins S1/S2 family.

In Pseudomonas aeruginosa, this protein is Pyocin-S1 immunity protein (imm1).